The following is a 518-amino-acid chain: D-aminopeptidase (518 aa).

Ser-62 serves as the catalytic Nucleophile. The active-site Proton donor/acceptor is Lys-65. The disordered stretch occupies residues 373 to 392 (FGTGPEKMDISGENEAQSSM). An important for specificity region spans residues 477 to 487 (QRSMDAPSPGE). Residue Asp-481 coordinates substrate.

The protein belongs to the peptidase S12 family. In terms of assembly, homodimer.

It carries out the reaction Release of an N-terminal D-amino acid from a peptide, Xaa-|-Yaa-, in which Xaa is preferably D-Ala, D-Ser or D-Thr. D-amino acid amides and methyl esters also are hydrolyzed, as is glycine amide.. With respect to regulation, inhibited by beta-lactam compounds such as 6-aminopenicillic acid, 7-aminocephalosporanic acid, benzylpenicillin and ampicillin. Inhibited by p-chloromercuribenzoate. In terms of biological role, hydrolyzes N-terminal residues in D-amino acid-containing peptides. The polypeptide is D-aminopeptidase (Brucella melitensis biotype 1 (strain ATCC 23456 / CCUG 17765 / NCTC 10094 / 16M)).